We begin with the raw amino-acid sequence, 291 residues long: N-acetylmannosamine kinase (291 aa).

Residues 5–12 (AIDIGGTK) and 132–139 (GVGGGVVS) each bind ATP. Residues histidine 156, cysteine 166, cysteine 168, and cysteine 173 each contribute to the Zn(2+) site.

The protein belongs to the ROK (NagC/XylR) family. NanK subfamily. In terms of assembly, homodimer.

It catalyses the reaction an N-acyl-D-mannosamine + ATP = an N-acyl-D-mannosamine 6-phosphate + ADP + H(+). It participates in amino-sugar metabolism; N-acetylneuraminate degradation; D-fructose 6-phosphate from N-acetylneuraminate: step 2/5. In terms of biological role, catalyzes the phosphorylation of N-acetylmannosamine (ManNAc) to ManNAc-6-P. This Escherichia coli O6:K15:H31 (strain 536 / UPEC) protein is N-acetylmannosamine kinase.